A 291-amino-acid chain; its full sequence is Acetyl-coenzyme A carboxylase carboxyl transferase subunit beta (291 aa).

In terms of domain architecture, CoA carboxyltransferase N-terminal spans 34–291 (MWTKCSNCNN…LILHGVNKYE (258 aa)). Zn(2+)-binding residues include cysteine 38, cysteine 41, cysteine 57, and cysteine 60. Residues 38–60 (CSNCNNMIYYEDLENNKYVCTKC) form a C4-type zinc finger.

It belongs to the AccD/PCCB family. As to quaternary structure, acetyl-CoA carboxylase is a heterohexamer composed of biotin carboxyl carrier protein (AccB), biotin carboxylase (AccC) and two subunits each of ACCase subunit alpha (AccA) and ACCase subunit beta (AccD). Requires Zn(2+) as cofactor.

It is found in the cytoplasm. The enzyme catalyses N(6)-carboxybiotinyl-L-lysyl-[protein] + acetyl-CoA = N(6)-biotinyl-L-lysyl-[protein] + malonyl-CoA. The protein operates within lipid metabolism; malonyl-CoA biosynthesis; malonyl-CoA from acetyl-CoA: step 1/1. Functionally, component of the acetyl coenzyme A carboxylase (ACC) complex. Biotin carboxylase (BC) catalyzes the carboxylation of biotin on its carrier protein (BCCP) and then the CO(2) group is transferred by the transcarboxylase to acetyl-CoA to form malonyl-CoA. The chain is Acetyl-coenzyme A carboxylase carboxyl transferase subunit beta from Clostridium botulinum (strain Eklund 17B / Type B).